A 755-amino-acid chain; its full sequence is Tryptophan 2-monooxygenase (755 aa).

The FMN site is built by S247, E267, K275, and R295. R295 provides a ligand contact to substrate.

The protein belongs to the tryptophan 2-monooxygenase family. FMN is required as a cofactor.

The catalysed reaction is L-tryptophan + O2 = indole-3-acetamide + CO2 + H2O. It participates in plant hormone metabolism; auxin biosynthesis. The polypeptide is Tryptophan 2-monooxygenase (iaaM) (Agrobacterium vitis (Rhizobium vitis)).